A 307-amino-acid polypeptide reads, in one-letter code: Probable GTP 3',8-cyclase (307 aa).

One can recognise a Radical SAM core domain in the interval 5–231; sequence RFGRPVTNLR…MHRRKKYFIP (227 aa). Arg-14 is a binding site for GTP. 3 residues coordinate [4Fe-4S] cluster: Cys-21, Cys-25, and Cys-28. Lys-62 lines the GTP pocket. Gly-66 serves as a coordination point for S-adenosyl-L-methionine. Thr-91 is a binding site for GTP. Position 115 (Ser-115) interacts with S-adenosyl-L-methionine. Lys-151 serves as a coordination point for GTP. Residue Met-190 coordinates S-adenosyl-L-methionine. [4Fe-4S] cluster contacts are provided by Cys-251 and Cys-254. 256 to 258 is a GTP binding site; sequence RLR. [4Fe-4S] cluster is bound at residue Cys-268.

Belongs to the radical SAM superfamily. MoaA family. [4Fe-4S] cluster is required as a cofactor.

The catalysed reaction is GTP + AH2 + S-adenosyl-L-methionine = (8S)-3',8-cyclo-7,8-dihydroguanosine 5'-triphosphate + 5'-deoxyadenosine + L-methionine + A + H(+). Its pathway is cofactor biosynthesis; molybdopterin biosynthesis. In terms of biological role, catalyzes the cyclization of GTP to (8S)-3',8-cyclo-7,8-dihydroguanosine 5'-triphosphate. In Thermococcus kodakarensis (strain ATCC BAA-918 / JCM 12380 / KOD1) (Pyrococcus kodakaraensis (strain KOD1)), this protein is Probable GTP 3',8-cyclase.